A 524-amino-acid chain; its full sequence is Alkaline phosphatase, tissue-nonspecific isozyme (524 aa).

Positions 1-17 are cleaved as a signal peptide; that stretch reads MISPFLLLAIGTCFASS. Mg(2+) is bound at residue D60. 2 residues coordinate Zn(2+): D60 and S110. The active-site Phosphoserine intermediate is the S110. S110 carries the post-translational modification Phosphoserine. C139 and C201 are oxidised to a cystine. N140 carries an N-linked (GlcNAc...) asparagine glycan. Position 173 (T173) interacts with Mg(2+). N230 is a glycosylation site (N-linked (GlcNAc...) asparagine). E235 lines the Ca(2+) pocket. The N-linked (GlcNAc...) asparagine glycan is linked to N271. Ca(2+)-binding residues include F290 and E291. A glycan (N-linked (GlcNAc...) asparagine) is linked at N303. Residue D306 participates in Ca(2+) binding. Residue E332 coordinates Mg(2+). The Zn(2+) site is built by D337, H341, D378, and H379. An N-linked (GlcNAc...) asparagine glycan is attached at N430. H454 is a Zn(2+) binding site. A disulfide bond links C489 and C497. The GPI-anchor amidated serine moiety is linked to residue S499. Positions 500–524 are cleaved as a propeptide — removed in mature form; the sequence is ASSSGSPSPGPLLLLLALLPLGSLF.

The protein belongs to the alkaline phosphatase family. Homodimer. Mg(2+) is required as a cofactor. Requires Zn(2+) as cofactor. It depends on Ca(2+) as a cofactor. N-glycosylated.

It is found in the cell membrane. The protein resides in the extracellular vesicle membrane. Its subcellular location is the mitochondrion membrane. The protein localises to the mitochondrion intermembrane space. The enzyme catalyses a phosphate monoester + H2O = an alcohol + phosphate. It carries out the reaction diphosphate + H2O = 2 phosphate + H(+). It catalyses the reaction pyridoxal 5'-phosphate + H2O = pyridoxal + phosphate. The catalysed reaction is phosphoethanolamine + H2O = ethanolamine + phosphate. The enzyme catalyses N-phosphocreatine + H2O = creatine + phosphate. It carries out the reaction ATP + H2O = ADP + phosphate + H(+). It catalyses the reaction ADP + H2O = AMP + phosphate + H(+). The catalysed reaction is AMP + H2O = adenosine + phosphate. With respect to regulation, phosphatase activity is specifically inhibited by 5-((5-chloro-2-methoxyphenyl)sulfonamido)nicotinamide (SBI-425). Its function is as follows. Alkaline phosphatase that metabolizes various phosphate compounds and plays a key role in skeletal mineralization and adaptive thermogenesis. Has broad substrate specificity and can hydrolyze a considerable variety of compounds: however, only a few substrates, such as diphosphate (inorganic pyrophosphate; PPi), pyridoxal 5'-phosphate (PLP) and N-phosphocreatine are natural substrates. Plays an essential role in skeletal and dental mineralization via its ability to hydrolyze extracellular diphosphate, a potent mineralization inhibitor, to phosphate: it thereby promotes hydroxyapatite crystal formation and increases inorganic phosphate concentration. Acts in a non-redundant manner with PHOSPHO1 in skeletal mineralization: while PHOSPHO1 mediates the initiation of hydroxyapatite crystallization in the matrix vesicles (MVs), ALPL/TNAP catalyzes the spread of hydroxyapatite crystallization in the extracellular matrix. Also promotes dephosphorylation of osteopontin (SSP1), an inhibitor of hydroxyapatite crystallization in its phosphorylated state; it is however unclear whether ALPL/TNAP mediates SSP1 dephosphorylation via a direct or indirect manner. Catalyzes dephosphorylation of PLP to pyridoxal (PL), the transportable form of vitamin B6, in order to provide a sufficient amount of PLP in the brain, an essential cofactor for enzymes catalyzing the synthesis of diverse neurotransmitters. Additionally, also able to mediate ATP degradation in a stepwise manner to adenosine, thereby regulating the availability of ligands for purinergic receptors. Also capable of dephosphorylating microbial products, such as lipopolysaccharides (LPS) as well as other phosphorylated small-molecules, such as poly-inosine:cytosine (poly I:C). Acts as a key regulator of adaptive thermogenesis as part of the futile creatine cycle: localizes to the mitochondria of thermogenic fat cells and acts by mediating hydrolysis of N-phosphocreatine to initiate a futile cycle of creatine dephosphorylation and phosphorylation. During the futile creatine cycle, creatine and N-phosphocreatine are in a futile cycle, which dissipates the high energy charge of N-phosphocreatine as heat without performing any mechanical or chemical work. The protein is Alkaline phosphatase, tissue-nonspecific isozyme (ALPL) of Bos taurus (Bovine).